We begin with the raw amino-acid sequence, 351 residues long: Anthranilate phosphoribosyltransferase (351 aa).

5-phospho-alpha-D-ribose 1-diphosphate contacts are provided by residues Gly80, Gly83–Asp84, Thr88, Asn90–Thr93, Lys108–Ser116, and Ser120. Residue Gly80 participates in anthranilate binding. Ser92 lines the Mg(2+) pocket. Asn111 is a binding site for anthranilate. Arg166 is an anthranilate binding site. Residues Asp229 and Glu230 each coordinate Mg(2+).

Belongs to the anthranilate phosphoribosyltransferase family. Homodimer. Requires Mg(2+) as cofactor.

The enzyme catalyses N-(5-phospho-beta-D-ribosyl)anthranilate + diphosphate = 5-phospho-alpha-D-ribose 1-diphosphate + anthranilate. Its pathway is amino-acid biosynthesis; L-tryptophan biosynthesis; L-tryptophan from chorismate: step 2/5. Catalyzes the transfer of the phosphoribosyl group of 5-phosphorylribose-1-pyrophosphate (PRPP) to anthranilate to yield N-(5'-phosphoribosyl)-anthranilate (PRA). The sequence is that of Anthranilate phosphoribosyltransferase from Chlorobium limicola (strain DSM 245 / NBRC 103803 / 6330).